Reading from the N-terminus, the 400-residue chain is S-adenosylmethionine synthase (400 aa).

ATP is bound at residue 136-141 (GTGSTD).

The protein belongs to the AdoMet synthase 2 family. Requires Mg(2+) as cofactor.

It carries out the reaction L-methionine + ATP + H2O = S-adenosyl-L-methionine + phosphate + diphosphate. The protein operates within amino-acid biosynthesis; S-adenosyl-L-methionine biosynthesis; S-adenosyl-L-methionine from L-methionine: step 1/1. Functionally, catalyzes the formation of S-adenosylmethionine from methionine and ATP. The sequence is that of S-adenosylmethionine synthase from Methanoregula boonei (strain DSM 21154 / JCM 14090 / 6A8).